The sequence spans 402 residues: D-mannonate dehydratase (402 aa).

Positions 37 and 122 each coordinate substrate. The Proton donor/acceptor role is filled by Tyr159. A Mg(2+)-binding site is contributed by Asp210. His212 acts as the Proton donor/acceptor in catalysis. Mg(2+) is bound by residues Glu236 and Glu262. The substrate site is built by Glu262, Arg283, His312, Asp316, and Glu339.

Belongs to the mandelate racemase/muconate lactonizing enzyme family. GalD subfamily. Homotetramer. Mg(2+) is required as a cofactor.

The enzyme catalyses D-mannonate = 2-dehydro-3-deoxy-D-gluconate + H2O. The protein operates within carbohydrate metabolism; pentose and glucuronate interconversion. In terms of biological role, catalyzes the dehydration of D-mannonate. Has no detectable activity with a panel of 70 other acid sugars (in vitro). The polypeptide is D-mannonate dehydratase (manD) (Novosphingobium aromaticivorans (strain ATCC 700278 / DSM 12444 / CCUG 56034 / CIP 105152 / NBRC 16084 / F199)).